Consider the following 284-residue polypeptide: RNase adapter protein RapZ (284 aa).

8-15 is a binding site for ATP; it reads GRSGSGKS. 56-59 contributes to the GTP binding site; that stretch reads DVRN. Residues 266-284 are RNA-binding; that stretch reads RSRGKNVQSRHRTLEKRKP.

The protein belongs to the RapZ-like family. RapZ subfamily. Homotrimer.

Modulates the synthesis of GlmS, by affecting the processing and stability of the regulatory small RNA GlmZ. When glucosamine-6-phosphate (GlcN6P) concentrations are high in the cell, RapZ binds GlmZ and targets it to cleavage by RNase E. Consequently, GlmZ is inactivated and unable to activate GlmS synthesis. Under low GlcN6P concentrations, RapZ is sequestered and inactivated by an other regulatory small RNA, GlmY, preventing GlmZ degradation and leading to synthesis of GlmS. In Shigella dysenteriae serotype 1 (strain Sd197), this protein is RNase adapter protein RapZ.